Reading from the N-terminus, the 220-residue chain is Kinetochore protein Spc25 (220 aa).

Residues 79 to 114 (HLTQEVEAIKLRNLAMKDQIKQQKMLNNQRKNEIME) are a coiled coil.

The protein belongs to the SPC25 family. In terms of assembly, component of the Ndc80 complex, which is composed of Ndc80, Nuf2 and Spc25.

The protein resides in the nucleus. Its subcellular location is the chromosome. It localises to the centromere. It is found in the kinetochore. In terms of biological role, acts as a component of the essential kinetochore-associated Ndc80 complex, which is required for chromosome segregation and spindle checkpoint activity during meiosis and mitosis. Required for kinetochore integrity and the organization of stable microtubule binding sites in the outer plate of the kinetochore. Participates in SAC signaling that responds specifically to disruptions in spindle microtubule dynamics. The NDC80 complex synergistically enhances the affinity of the SKA1 complex for microtubules and may allow the NDC80 complex to track depolymerizing microtubules. In Drosophila orena (Fruit fly), this protein is Kinetochore protein Spc25.